The sequence spans 174 residues: Large ribosomal subunit protein uL10 (174 aa).

The protein belongs to the universal ribosomal protein uL10 family. As to quaternary structure, part of the ribosomal stalk of the 50S ribosomal subunit. The N-terminus interacts with L11 and the large rRNA to form the base of the stalk. The C-terminus forms an elongated spine to which L12 dimers bind in a sequential fashion forming a multimeric L10(L12)X complex.

Functionally, forms part of the ribosomal stalk, playing a central role in the interaction of the ribosome with GTP-bound translation factors. This Geobacter metallireducens (strain ATCC 53774 / DSM 7210 / GS-15) protein is Large ribosomal subunit protein uL10.